A 625-amino-acid chain; its full sequence is Branchpoint-bridging protein (625 aa).

Residues 1 to 16 (MSWRSNAQRTGMNAQP) are compositionally biased toward polar residues. 2 disordered regions span residues 1 to 154 (MSWR…AIGA) and 177 to 206 (LRSGDFVPPDRERSPSPPPTYDNQGRRTNT). Residues 22-31 (RWGGAGGAGE) are compositionally biased toward gly residues. Composition is skewed to low complexity over residues 32–61 (GPSSSGSPPSSYHQPSHPYQSSYSHQSQPY), 70–91 (SSSSSSSNPRDAALAAAAAVAA), and 110–130 (SYAAPSLLTSASTADGSGADA). Over residues 177–190 (LRSGDFVPPDRERS) the composition is skewed to basic and acidic residues. The KH domain maps to 253–330 (YLPIKEFPEI…ASVKKCIKLI (78 aa)). 2 consecutive CCHC-type zinc fingers follow at residues 368-385 (QLCKNCGNKGHRAFECPE) and 393-410 (IICHRCGGQGHLARDCTQ). A disordered region spans residues 466 to 533 (GPDGKKIPPW…HAYHQQQQAY (68 aa)). The segment covering 488-503 (APRGGDAGRGGWGHRG) has biased composition (gly residues). The span at 516–533 (QHQQQQHPHAYHQQQQAY) shows a compositional bias: low complexity.

Belongs to the BBP/SF1 family.

The protein resides in the nucleus. Functionally, necessary for the splicing of pre-mRNA. Has a role in the recognition of the branch site (5'-UACUAAC-3'), the pyrimidine tract and the 3'-splice site at the 3'-end of introns. The sequence is that of Branchpoint-bridging protein (BBP) from Mycosarcoma maydis (Corn smut fungus).